The primary structure comprises 160 residues: Cytochrome b6-f complex subunit 4 (160 aa).

Helical transmembrane passes span 36 to 56 (LLYI…GLAV), 95 to 115 (LLGV…PFLE), and 131 to 151 (TVFL…TLPI).

The protein belongs to the cytochrome b family. PetD subfamily. The 4 large subunits of the cytochrome b6-f complex are cytochrome b6, subunit IV (17 kDa polypeptide, petD), cytochrome f and the Rieske protein, while the 4 small subunits are petG, petL, petM and petN. The complex functions as a dimer.

The protein resides in the plastid. The protein localises to the chloroplast thylakoid membrane. Functionally, component of the cytochrome b6-f complex, which mediates electron transfer between photosystem II (PSII) and photosystem I (PSI), cyclic electron flow around PSI, and state transitions. This chain is Cytochrome b6-f complex subunit 4, found in Oryza sativa (Rice).